The sequence spans 35 residues: Photosystem II reaction center protein T (35 aa).

A helical membrane pass occupies residues 3-23; it reads ALVYTFLLVGTLGIIFFAIFF.

This sequence belongs to the PsbT family. In terms of assembly, PSII is composed of 1 copy each of membrane proteins PsbA, PsbB, PsbC, PsbD, PsbE, PsbF, PsbH, PsbI, PsbJ, PsbK, PsbL, PsbM, PsbT, PsbY, PsbZ, Psb30/Ycf12, at least 3 peripheral proteins of the oxygen-evolving complex and a large number of cofactors. It forms dimeric complexes.

The protein localises to the plastid. The protein resides in the chloroplast thylakoid membrane. In terms of biological role, found at the monomer-monomer interface of the photosystem II (PS II) dimer, plays a role in assembly and dimerization of PSII. PSII is a light-driven water plastoquinone oxidoreductase, using light energy to abstract electrons from H(2)O, generating a proton gradient subsequently used for ATP formation. This chain is Photosystem II reaction center protein T, found in Chaetosphaeridium globosum (Charophycean green alga).